We begin with the raw amino-acid sequence, 269 residues long: uncharacterized protein (269 aa).

ATP contacts are provided by residues 12-19 (GKGGTGKS) and 130-137 (GYLIVGKS).

To M.jannaschii MJ0578.

This is an uncharacterized protein from Methanocaldococcus jannaschii (strain ATCC 43067 / DSM 2661 / JAL-1 / JCM 10045 / NBRC 100440) (Methanococcus jannaschii).